A 131-amino-acid chain; its full sequence is D-ribose pyranase (131 aa).

His20 acts as the Proton donor in catalysis. Residues Asp28, His98, and 120-122 (YAN) contribute to the substrate site.

Belongs to the RbsD / FucU family. RbsD subfamily. As to quaternary structure, homodecamer.

It is found in the cytoplasm. It catalyses the reaction beta-D-ribopyranose = beta-D-ribofuranose. It functions in the pathway carbohydrate metabolism; D-ribose degradation; D-ribose 5-phosphate from beta-D-ribopyranose: step 1/2. Its function is as follows. Catalyzes the interconversion of beta-pyran and beta-furan forms of D-ribose. This chain is D-ribose pyranase, found in Chloroflexus aggregans (strain MD-66 / DSM 9485).